We begin with the raw amino-acid sequence, 620 residues long: UvrABC system protein C (620 aa).

The GIY-YIG domain maps to 13–92 (DKPGVYIMKN…IKKYSPRYNI (80 aa)). In terms of domain architecture, UVR spans 204 to 239 (TSIIKNLKLEMEKAAEELEFEKAAKIRDRILAIELI).

This sequence belongs to the UvrC family. Interacts with UvrB in an incision complex.

It localises to the cytoplasm. The UvrABC repair system catalyzes the recognition and processing of DNA lesions. UvrC both incises the 5' and 3' sides of the lesion. The N-terminal half is responsible for the 3' incision and the C-terminal half is responsible for the 5' incision. This chain is UvrABC system protein C, found in Clostridium perfringens (strain SM101 / Type A).